The following is a 1249-amino-acid chain: LRR receptor-like serine/threonine-protein kinase GSO1 (1249 aa).

The first 18 residues, 1 to 18 (MQPLVLLLLFILCFSGLG), serve as a signal peptide directing secretion. Topologically, residues 19-876 (QPGIINNDLQ…QQGLSARSVV (858 aa)) are extracellular. Residues Asn-77 and Asn-117 are each glycosylated (N-linked (GlcNAc...) asparagine). 31 LRR repeats span residues 94–118 (FDNLIHLDLSSNNLVGPIPTALSNL), 119–142 (TSLESLFLFSNQLTGEIPSQLGSL), 144–166 (NIRSLRIGDNELVGDIPETLGNL), 168–190 (NLQMLALASCRLTGPIPSQLGRL), 191–214 (VRVQSLILQDNYLEGPIPAELGNC), 216–238 (DLTVFTAAENMLNGTIPAELGRL), 239–262 (ENLEILNLANNSLTGEIPSQLGEM), 264–285 (QLQYLSLMANQLQGLIPKSLAD), 286–310 (LGNLQTLDLSANNLTGEIPEEFWNM), 312–334 (QLLDLVLANNHLSGSLPKSICSN), 336–359 (TNLEQLVLSGTQLSGEIPVELSKC), 360–383 (QSLKQLDLSNNSLAGSIPEALFEL), 385–407 (ELTDLYLHNNTLEGTLSPSISNL), 408–431 (TNLQWLVLYHNNLEGKLPKEISAL), 433–455 (KLEVLFLYENRFSGEIPQEIGNC), 457–479 (SLKMIDMFGNHFEGEIPPSIGRL), 480–503 (KELNLLHLRQNELVGGLPASLGNC), 505–527 (QLNILDLADNQLSGSIPSSFGFL), 528–551 (KGLEQLMLYNNSLQGNLPDSLISL), 553–574 (NLTRINLSHNRLNGTIHPLCGS), 576–598 (SYLSFDVTNNGFEDEIPLELGNS), 599–622 (QNLDRLRLGKNQLTGKIPWTLGKI), 623–646 (RELSLLDMSSNALTGTIPLQLVLC), 648–670 (KLTHIDLNNNFLSGPIPPWLGKL), 671–694 (SQLGELKLSSNQFVESLPTELFNC), 696–718 (KLLVLSLDGNSLNGSIPQEIGNL), 719–742 (GALNVLNLDKNQFSGSLPQAMGKL), 744–766 (KLYELRLSRNSLTGEIPVEIGQL), 767–791 (QDLQSALDLSYNNFTGDIPSTIGTL), 792–815 (SKLETLDLSHNQLTGEVPGSVGDM), and 817–838 (SLGYLNVSFNNLGGKLKKQFSR). N-linked (GlcNAc...) asparagine glycans are attached at residues Asn-213, Asn-228, and Asn-248. N-linked (GlcNAc...) asparagine glycosylation is found at Asn-298, Asn-309, and Asn-334. N-linked (GlcNAc...) asparagine glycans are attached at residues Asn-369, Asn-393, and Asn-406. Asn-454 carries an N-linked (GlcNAc...) asparagine glycan. N-linked (GlcNAc...) asparagine glycans are attached at residues Asn-537, Asn-553, Asn-558, and Asn-565. N-linked (GlcNAc...) asparagine glycosylation is found at Asn-693 and Asn-708. Asn-779 carries an N-linked (GlcNAc...) asparagine glycan. Asn-822 carries N-linked (GlcNAc...) asparagine glycosylation. A helical transmembrane segment spans residues 877-897 (IISAISALTAIGLMILVIALF). The Cytoplasmic portion of the chain corresponds to 898 to 1249 (FKQRHDFFKK…NNRTAGYKKL (352 aa)). Phosphothreonine is present on Thr-948. The Protein kinase domain maps to 951–1240 (LSEEFMIGSG…ACDSLLHVYN (290 aa)). ATP-binding positions include 957 to 965 (IGSGGSGKV) and Lys-979. Phosphotyrosine occurs at positions 1027 and 1071. Asp-1084 functions as the Proton acceptor in the catalytic mechanism. Phosphotyrosine occurs at positions 1129 and 1136.

This sequence belongs to the protein kinase superfamily. Ser/Thr protein kinase family. Interacts with CIF1 and CIF2. As to expression, mostly expressed in siliques, seeds, developing embryos and seedlings, detected in flower buds and roots, but not in leaves or stems.

The protein resides in the cell membrane. It catalyses the reaction L-seryl-[protein] + ATP = O-phospho-L-seryl-[protein] + ADP + H(+). The enzyme catalyses L-threonyl-[protein] + ATP = O-phospho-L-threonyl-[protein] + ADP + H(+). Its function is as follows. Together with GSO2, receptor-like serine/threonine-kinase required during the development of the epidermal surface in embryos and cotyledons. In coordination with GSO2, regulates root growth through control of cell division and cell fate specification. Controls seedling root growth by modulating sucrose response after germination. Receptor of the peptide hormones CIF1 and CIF2 required for contiguous Casparian strip diffusion barrier formation in roots. Required for localizing CASP proteins into the Casparian strip following an uninterrupted, ring-like domain, to trigger endodermal differentiation and thus regulate potassium ion (K) homeostasis. Involved in the maintenance of water transport and root pressure. May also be involved in the regulation of suberin accumulation in the endodermis. In Arabidopsis thaliana (Mouse-ear cress), this protein is LRR receptor-like serine/threonine-protein kinase GSO1.